The sequence spans 157 residues: NADPH-dependent 7-cyano-7-deazaguanine reductase (157 aa).

Catalysis depends on Cys-55, which acts as the Thioimide intermediate. Asp-62 acts as the Proton donor in catalysis. Substrate contacts are provided by residues 77 to 79 (VES) and 96 to 97 (HE).

It belongs to the GTP cyclohydrolase I family. QueF type 1 subfamily.

The protein localises to the cytoplasm. The enzyme catalyses 7-aminomethyl-7-carbaguanine + 2 NADP(+) = 7-cyano-7-deazaguanine + 2 NADPH + 3 H(+). Its pathway is tRNA modification; tRNA-queuosine biosynthesis. Catalyzes the NADPH-dependent reduction of 7-cyano-7-deazaguanine (preQ0) to 7-aminomethyl-7-deazaguanine (preQ1). The sequence is that of NADPH-dependent 7-cyano-7-deazaguanine reductase from Neisseria gonorrhoeae (strain ATCC 700825 / FA 1090).